An 829-amino-acid chain; its full sequence is Leucine--tRNA ligase (829 aa).

A 'HIGH' region motif is present at residues 34-44 (PYPSGNIHMGH). The 'KMSKS' region signature appears at 591-595 (KMSKS). Lys-594 is an ATP binding site.

This sequence belongs to the class-I aminoacyl-tRNA synthetase family.

It localises to the cytoplasm. It catalyses the reaction tRNA(Leu) + L-leucine + ATP = L-leucyl-tRNA(Leu) + AMP + diphosphate. This is Leucine--tRNA ligase from Ehrlichia canis (strain Jake).